Consider the following 249-residue polypeptide: Cytochrome c oxidase subunit 2 (249 aa).

The first 13 residues, 1–13 (MLNLFQIMNMINN), serve as a signal peptide directing secretion. The Mitochondrial intermembrane portion of the chain corresponds to 14–40 (DVPTPYGFYFQDSATPNQEGILELHDN). The chain crosses the membrane as a helical span at residues 41-62 (IMFYLVVILGLVSWMLFTIVRT). Residues 63 to 80 (YSRNPMAYKYIKHGQTIE) are Mitochondrial matrix-facing. The chain crosses the membrane as a helical span at residues 81-105 (IIWKIFPAVILLTIAFPSFILLYLC). The Mitochondrial intermembrane portion of the chain corresponds to 106–249 (DEVISPAMTI…PKFLEWLNEQ (144 aa)). Cu cation contacts are provided by histidine 184, cysteine 219, glutamate 221, cysteine 223, histidine 227, and methionine 230. A Mg(2+)-binding site is contributed by glutamate 221.

Belongs to the cytochrome c oxidase subunit 2 family. In terms of assembly, component of the cytochrome c oxidase (complex IV, CIV), a multisubunit enzyme composed of a catalytic core of 3 subunits and several supernumerary subunits. The complex exists as a monomer or a dimer and forms supercomplexes (SCs) in the inner mitochondrial membrane with ubiquinol-cytochrome c oxidoreductase (cytochrome b-c1 complex, complex III, CIII). The cofactor is Cu cation. The signal sequence of COX2 is processed by IMP1.

Its subcellular location is the mitochondrion inner membrane. It catalyses the reaction 4 Fe(II)-[cytochrome c] + O2 + 8 H(+)(in) = 4 Fe(III)-[cytochrome c] + 2 H2O + 4 H(+)(out). In terms of biological role, component of the cytochrome c oxidase, the last enzyme in the mitochondrial electron transport chain which drives oxidative phosphorylation. The respiratory chain contains 3 multisubunit complexes succinate dehydrogenase (complex II, CII), ubiquinol-cytochrome c oxidoreductase (cytochrome b-c1 complex, complex III, CIII) and cytochrome c oxidase (complex IV, CIV), that cooperate to transfer electrons derived from NADH and succinate to molecular oxygen, creating an electrochemical gradient over the inner membrane that drives transmembrane transport and the ATP synthase. Cytochrome c oxidase is the component of the respiratory chain that catalyzes the reduction of oxygen to water. Electrons originating from reduced cytochrome c in the intermembrane space (IMS) are transferred via the dinuclear copper A center (CU(A)) of subunit 2 and heme A of subunit 1 to the active site in subunit 1, a binuclear center (BNC) formed by heme A3 and copper B (CU(B)). The BNC reduces molecular oxygen to 2 water molecules using 4 electrons from cytochrome c in the IMS and 4 protons from the mitochondrial matrix. The chain is Cytochrome c oxidase subunit 2 (COX2) from Maudiozyma exigua (Yeast).